The primary structure comprises 417 residues: PRKCA-binding protein (417 aa).

A PDZ domain is found at 22-105 (KVTLQKDAQN…EVTIHYNKLQ (84 aa)). Positions 44 and 46 each coordinate Zn(2+). The residue at position 82 (Thr82) is a Phosphothreonine. The 214-residue stretch at 144 to 357 (LCNDGLVKRL…CYSVLRDADV (214 aa)) folds into the AH domain. A disordered region spans residues 375-417 (QDEFTDGEDEEDEDEEDTAAGEPPRDSRGAAGPLDKGGSWCNS). Over residues 377-393 (EFTDGEDEEDEDEEDTA) the composition is skewed to acidic residues. Cys415 carries the S-palmitoyl cysteine; by DHHC8 lipid modification.

In terms of assembly, monomer and homodimer. Interacts with CXADR. Interacts presynaptically with the glutamate receptors GRIA2, GRIA3, GRIK3, isoform 3 of GRIA4, isoform A of GRM4, GRM7 and GRM8; with NAPA and NAPB; and with BTG2. The interaction with NAPA and NAPB disrupts the interaction with GRIA2, conducting to the internalization of GRIA2. Interacts with PRKCA; with the amine transporters SLC6A2 and SLC6A3; with the channels ASIC1 and ASIC2; with the GTP-binding proteins ARF1 and ARF3; with the ephrin receptor tyrosine kinases EPHA7, EPHB1 and EPHB2; with ERBB2 and through its PDZ domain with the C-terminal tail of PRLHR. Interacts with UNC5A. Interacts (via AH domain) with NCS1/FREQ; in a calcium-dependent manner. Interacts with F-actin and associates with the ARP2/3 complex. Interacts (via PDZ domain) with ARF1 (activated); the interaction blocks Arp2/3 complex inhibition. Interacts with SORCS3. Post-translationally, phosphorylation at Thr-82 appears to inhibit the interaction with AMPA receptors. In terms of processing, palmitoylation on Cys-415 is essential for long-term synaptic depression (LTD).

It localises to the cytoplasm. Its subcellular location is the perinuclear region. The protein localises to the membrane. It is found in the postsynaptic density. The protein resides in the synapse. It localises to the synaptosome. Its subcellular location is the cytoskeleton. Functionally, probable adapter protein that bind to and organize the subcellular localization of a variety of membrane proteins containing some PDZ recognition sequence. Involved in the clustering of various receptors, possibly by acting at the receptor internalization level. Plays a role in synaptic plasticity by regulating the trafficking and internalization of AMPA receptors. May be regulated upon PRKCA activation. May regulate ASIC1/ASIC3 channel. Regulates actin polymerization by inhibiting the actin-nucleating activity of the Arp2/3 complex; the function is competitive with nucleation promoting factors and is linked to neuronal morphology regulation and AMPA receptor (AMPAR) endocytosis. Via interaction with the Arp2/3 complex involved in regulation of synaptic plasicity of excitatory synapses and required for spine shrinkage during long-term depression (LTD). Involved in regulation of astrocyte morphology, antagonistic to Arp2/3 complex activator WASL/N-WASP function. This Bos taurus (Bovine) protein is PRKCA-binding protein (PICK1).